Consider the following 172-residue polypeptide: Adenine phosphoribosyltransferase (172 aa).

Belongs to the purine/pyrimidine phosphoribosyltransferase family. As to quaternary structure, homodimer.

The protein resides in the cytoplasm. The catalysed reaction is AMP + diphosphate = 5-phospho-alpha-D-ribose 1-diphosphate + adenine. It participates in purine metabolism; AMP biosynthesis via salvage pathway; AMP from adenine: step 1/1. Its function is as follows. Catalyzes a salvage reaction resulting in the formation of AMP, that is energically less costly than de novo synthesis. The polypeptide is Adenine phosphoribosyltransferase (Clostridium botulinum (strain Loch Maree / Type A3)).